The following is a 324-amino-acid chain: bZIP transcription factor 46 (324 aa).

A disordered region spans residues 106–127 (LGGSDDEDPAAAAAAAAPAQRQ). Positions 115 to 124 (AAAAAAAAPA) are enriched in low complexity. The 46-residue stretch at 242–287 (VERRQRRMIKNRESAARSRARKQAYIMELEAEVAKLKEQKAELQKK) folds into the bZIP domain. Residues 244–263 (RRQRRMIKNRESAARSRARK) are basic motif. The segment at 270-284 (LEAEVAKLKEQKAEL) is leucine-zipper.

In terms of assembly, interacts with MODD. Interacts with SAPK2, SAPK6 and SAPK9. Phosphorylated on serine and threonine residues by SAPK2, SAPK6 and SAPK9. Phosphorylation is required for full transactivation activity. In terms of tissue distribution, expressed in roots, shoots, leaves, flag leaves, stems, flowers and panicles. Widely expressed.

The protein localises to the nucleus. Transcription factor involved in abscisic acid (ABA) signaling pathway. Transcription factor activity is fully activated by ABA. Acts as a positive regulator of the expression of abiotic stress-responsive genes through an ABA-dependent signaling pathway. Acts as a positive regulator of ABA signaling and drought stress tolerance. Plays an important role in ABA and auxin responses. Involved in ABA signaling and stress responses by directly binding to the ABA-responsive element (ABRE)-containing genes, especially WRKY family genes. Modulates response to auxin. Suppresses auxin signaling by targeting ABRE-containing genes related to auxin metabolism or signaling. The chain is bZIP transcription factor 46 from Oryza sativa subsp. japonica (Rice).